The chain runs to 48 residues: Large ribosomal subunit protein bL32 (48 aa).

The tract at residues 24 to 48 is disordered; sequence LPMPIKDKDGSYKMPHRVNPVTKEY.

Belongs to the bacterial ribosomal protein bL32 family.

The sequence is that of Large ribosomal subunit protein bL32 from Campylobacter lari (strain RM2100 / D67 / ATCC BAA-1060).